Reading from the N-terminus, the 250-residue chain is Bacteriorhodopsin (250 aa).

The Extracellular portion of the chain corresponds to 1–18; that stretch reads MCCAALAPPMAATVGPES. The chain crosses the membrane as a helical span at residues 19 to 37; the sequence is IWLWIGTIGMTLGTLYFVG. Residues 38–51 lie on the Cytoplasmic side of the membrane; that stretch reads RGRGVRDRKMQEFY. A helical membrane pass occupies residues 52–70; that stretch reads IITIFITTIAAAMYFAMAT. Over 71-86 the chain is Extracellular; the sequence is GFGVTEVMVGDEALTI. A helical membrane pass occupies residues 87–104; it reads YWARYADWLFTTPLLLLD. Over 105–115 the chain is Cytoplasmic; that stretch reads LSLLAGANRNT. The helical transmembrane segment at 116–135 threads the bilayer; sequence IATLIGLDVFMIGTGAIAAL. Residues 136–142 lie on the Extracellular side of the membrane; the sequence is SSTPGTR. A helical transmembrane segment spans residues 143 to 162; sequence IAWWAISTGALLALLYVLVG. Over 163-180 the chain is Cytoplasmic; sequence TLSENARNRAPEVASLFG. A helical membrane pass occupies residues 181 to 199; it reads RLRNLVIALWFLYPVVWIL. Residues 200 to 212 lie on the Extracellular side of the membrane; sequence GTEGTFGILPLYW. A helical membrane pass occupies residues 213–232; it reads ETAAFMVLDLSAKVGFGVIL. K225 is modified (N6-(retinylidene)lysine). The Cytoplasmic portion of the chain corresponds to 233 to 250; that stretch reads LQSRSVLERVATPTAAPT.

This sequence belongs to the archaeal/bacterial/fungal opsin family.

The protein localises to the cell membrane. In terms of biological role, light-driven proton pump. In Haloterrigena sp. (strain arg-4), this protein is Bacteriorhodopsin (bop).